An 824-amino-acid chain; its full sequence is MKPIPATPDHLGQHQESPRRKDKGEAESERQRTRERLEATLAGLAELGYLRHRQELLVKSALTPGAPTHGDTATRAGDTPRSLEEKFLEDNILLLKKQLNCLRKRDAGLLSQLHELDKQINDLKIDVEKTEEHLETDSRPSSGFYELSDGTSGSLSNSSNSVFSECLSSCHSSTCFCNPLETSLNLTDGQAKSADDFLEWLDYRDSQHETGTVRRSFSAPHSNSVDVAADVHPKYQCDLVSKNGNDIYRYPSPLHAVAVQSPMFLLSVMGNIKAEEPEEEIGPNDNDDCIVPELDHLKDEDSFLHQSSLCSLPLSSGKKMDGYILSIIQKKAHPVRTNKPRTSVNADPGKGILRHGSICVKQTGGVSQSSTVNLKNSKQTCLHSTGMISVDNSTYPSLKQCSKESLSEQLESKRMPSISTYPSCNVNELQSQNNSRNTVKSVCQGLARGSVAMTSNVQKENVTPNAPTNLSNASSSACNGSPRESTQMSALLPQEIKVVPPVKKISPKNTLLSYHASSSFDERPPLDFKSEGSSSQSLDEGLLVNAHYIPAQQQGVKLHKNIKNVKIVKSSTLKHRANVQYVAENGSQTLKEKSKAVGKKCRFPEDLDTNKKVKKSTPRTKKTSHPNFEPAVVGRNPVAVRSGIKSHGQPKDVVLAKPKHKRGDYRRWKSSAEISYEEALRRARRRAQREMMGVYAQVPFPYASPYAYIASDSEYSAECESLFHSTVVDTSEDEQSNYTTNCFGDSESSLSEVEFVGESTTSSDTDESGGLIWSQFVHTLPMQATATAELQTTAKAFVKIKASHNLKKKILRFRSGSLKLMTTV.

Disordered stretches follow at residues 1 to 34 (MKPI…QRTR), 61 to 80 (ALTP…GDTP), 131 to 150 (EEHL…LSDG), 454 to 487 (TSNV…ESTQ), and 516 to 536 (ASSS…SSSQ). The interval 2–343 (KPIPATPDHL…PVRTNKPRTS (342 aa)) is interaction with tcf7l1. Over residues 11-34 (LGQHQESPRRKDKGEAESERQRTR) the composition is skewed to basic and acidic residues. Positions 19–47 (RRKDKGEAESERQRTRERLEATLAGLAEL) form a coiled coil. Residues 520–530 (FDERPPLDFKS) show a composition bias toward basic and acidic residues. The short motif at 821-824 (MTTV) is the PDZ-binding element.

It belongs to the dapper family. Interacts with dbf4, dvl2 and tcf7l1.

It is found in the cytoplasm. The protein localises to the nucleus. Its function is as follows. Involved in regulation of intracellular signaling pathways during development. Specifically thought to play a role in canonical and/or non-canonical Wnt signaling pathways through interaction with DSH (Dishevelled) family proteins. Binds to dvl2 and regulates the degradation of ctnnb1/beta-catenin, thereby modulating the transcriptional activation of target genes of the Wnt signaling pathway. May also bind to and directly stimulate the activity of tcf7l1. This chain is Dapper 1 (dact1), found in Xenopus tropicalis (Western clawed frog).